A 227-amino-acid chain; its full sequence is GFP-like non-fluorescent chromoprotein (227 aa).

Residues 63–65 (AYG) constitute a cross-link (5-imidazolinone (Ala-Gly)). Position 64 is a 2,3-didehydrotyrosine (Y64).

The protein belongs to the GFP family. In terms of assembly, homotetramer. Contains a chromophore consisting of modified amino acid residues. The chromophore is formed by autocatalytic backbone condensation between Xaa-N and Gly-(N+2), and oxidation of Tyr-(N+1) to didehydrotyrosine. Maturation of the chromophore requires nothing other than molecular oxygen. The precise stereochemistry of the tyrosine has not been determined.

Its function is as follows. Non-fluorescent pigment protein that is mauve in color. The wild-type form is non-fluorescent. The polypeptide is GFP-like non-fluorescent chromoprotein (Condylactis gigantea (Giant Caribbean anemone)).